A 98-amino-acid polypeptide reads, in one-letter code: NADH-ubiquinone oxidoreductase chain 4L (98 aa).

A run of 3 helical transmembrane segments spans residues Met1–Leu21, Ser29–Leu49, and Ile61–Val81.

It belongs to the complex I subunit 4L family. As to quaternary structure, core subunit of respiratory chain NADH dehydrogenase (Complex I) which is composed of 45 different subunits.

It localises to the mitochondrion inner membrane. It carries out the reaction a ubiquinone + NADH + 5 H(+)(in) = a ubiquinol + NAD(+) + 4 H(+)(out). In terms of biological role, core subunit of the mitochondrial membrane respiratory chain NADH dehydrogenase (Complex I) which catalyzes electron transfer from NADH through the respiratory chain, using ubiquinone as an electron acceptor. Part of the enzyme membrane arm which is embedded in the lipid bilayer and involved in proton translocation. This is NADH-ubiquinone oxidoreductase chain 4L (MT-ND4L) from Rhinolophus monoceros (Formosan lesser horseshoe bat).